The following is a 248-amino-acid chain: uncharacterized protein (248 aa).

This sequence belongs to the glycosyltransferase 2 family.

This is an uncharacterized protein from Acanthamoeba polyphaga (Amoeba).